The chain runs to 1368 residues: DNA-directed RNA polymerase subunit beta (1368 aa).

The protein belongs to the RNA polymerase beta chain family. In terms of assembly, the RNAP catalytic core consists of 2 alpha, 1 beta, 1 beta' and 1 omega subunit. When a sigma factor is associated with the core the holoenzyme is formed, which can initiate transcription.

It carries out the reaction RNA(n) + a ribonucleoside 5'-triphosphate = RNA(n+1) + diphosphate. Functionally, DNA-dependent RNA polymerase catalyzes the transcription of DNA into RNA using the four ribonucleoside triphosphates as substrates. This Burkholderia pseudomallei (strain K96243) protein is DNA-directed RNA polymerase subunit beta.